The following is a 212-amino-acid chain: Holliday junction branch migration complex subunit RuvA (212 aa).

The tract at residues 1-63 (MIAKLKGLID…EDAISLFGFL (63 aa)) is domain I. The interval 64–142 (ETGERDWFRL…KIALGGFSPG (79 aa)) is domain II. The segment at 143–155 (GIKDALSASAPLP) is flexible linker. The interval 156-212 (AASGRMEDAVSALVNLGYKRLEAFQAVGETARELGDEADSSALIRAALKHLGKGLLG) is domain III.

Belongs to the RuvA family. In terms of assembly, homotetramer. Forms an RuvA(8)-RuvB(12)-Holliday junction (HJ) complex. HJ DNA is sandwiched between 2 RuvA tetramers; dsDNA enters through RuvA and exits via RuvB. An RuvB hexamer assembles on each DNA strand where it exits the tetramer. Each RuvB hexamer is contacted by two RuvA subunits (via domain III) on 2 adjacent RuvB subunits; this complex drives branch migration. In the full resolvosome a probable DNA-RuvA(4)-RuvB(12)-RuvC(2) complex forms which resolves the HJ.

It localises to the cytoplasm. In terms of biological role, the RuvA-RuvB-RuvC complex processes Holliday junction (HJ) DNA during genetic recombination and DNA repair, while the RuvA-RuvB complex plays an important role in the rescue of blocked DNA replication forks via replication fork reversal (RFR). RuvA specifically binds to HJ cruciform DNA, conferring on it an open structure. The RuvB hexamer acts as an ATP-dependent pump, pulling dsDNA into and through the RuvAB complex. HJ branch migration allows RuvC to scan DNA until it finds its consensus sequence, where it cleaves and resolves the cruciform DNA. The sequence is that of Holliday junction branch migration complex subunit RuvA from Paramagnetospirillum magneticum (strain ATCC 700264 / AMB-1) (Magnetospirillum magneticum).